The sequence spans 196 residues: Anthranilate synthase component 2 (196 aa).

Residues 4-196 enclose the Glutamine amidotransferase type-1 domain; that stretch reads LILIIDNYDS…RDILENFLRM (193 aa). 60 to 62 is a binding site for L-glutamine; the sequence is GPG. Residue Cys89 is the Nucleophile; for GATase activity of the active site. L-glutamine is bound by residues Gln93 and 138–139; that span reads SL. Residues His177 and Glu179 each act as for GATase activity in the active site.

In terms of assembly, heterotetramer consisting of two non-identical subunits: a beta subunit (TrpG) and a large alpha subunit (TrpE).

The catalysed reaction is chorismate + L-glutamine = anthranilate + pyruvate + L-glutamate + H(+). It participates in amino-acid biosynthesis; L-tryptophan biosynthesis; L-tryptophan from chorismate: step 1/5. Functionally, part of a heterotetrameric complex that catalyzes the two-step biosynthesis of anthranilate, an intermediate in the biosynthesis of L-tryptophan. In the first step, the glutamine-binding beta subunit (TrpG) of anthranilate synthase (AS) provides the glutamine amidotransferase activity which generates ammonia as a substrate that, along with chorismate, is used in the second step, catalyzed by the large alpha subunit of AS (TrpE) to produce anthranilate. In the absence of TrpG, TrpE can synthesize anthranilate directly from chorismate and high concentrations of ammonia. The chain is Anthranilate synthase component 2 (trpG) from Methanothermobacter marburgensis (strain ATCC BAA-927 / DSM 2133 / JCM 14651 / NBRC 100331 / OCM 82 / Marburg) (Methanobacterium thermoautotrophicum).